Here is a 510-residue protein sequence, read N- to C-terminus: NAD(P)H-quinone oxidoreductase subunit 2 A, chloroplastic (510 aa).

12 consecutive transmembrane segments (helical) span residues 31–51 (FIFP…IDLT), 59–79 (WFYF…LFRW), 99–119 (IFQF…VEYI), 124–144 (MAIT…MFLC), 149–169 (LITI…LSGY), 183–203 (YLLM…WLYG), 229–249 (ISIA…PAPF), 295–315 (WHLL…LLAI), 323–343 (MLAY…IVGD), 354–374 (YMLF…LFGL), 395–415 (ALSL…AGFF), and 418–438 (LYLF…IGLL).

Belongs to the complex I subunit 2 family. As to quaternary structure, NDH is composed of at least 16 different subunits, 5 of which are encoded in the nucleus.

Its subcellular location is the plastid. The protein localises to the chloroplast thylakoid membrane. The catalysed reaction is a plastoquinone + NADH + (n+1) H(+)(in) = a plastoquinol + NAD(+) + n H(+)(out). The enzyme catalyses a plastoquinone + NADPH + (n+1) H(+)(in) = a plastoquinol + NADP(+) + n H(+)(out). Functionally, NDH shuttles electrons from NAD(P)H:plastoquinone, via FMN and iron-sulfur (Fe-S) centers, to quinones in the photosynthetic chain and possibly in a chloroplast respiratory chain. The immediate electron acceptor for the enzyme in this species is believed to be plastoquinone. Couples the redox reaction to proton translocation, and thus conserves the redox energy in a proton gradient. This is NAD(P)H-quinone oxidoreductase subunit 2 A, chloroplastic from Saccharum officinarum (Sugarcane).